A 595-amino-acid polypeptide reads, in one-letter code: P2X purinoceptor 7 (595 aa).

Over 1 to 22 the chain is Cytoplasmic; it reads MPACCSCSDVFQYETNKVTRIQ. C4 carries the S-palmitoyl cysteine lipid modification. Residues 23 to 46 form a helical membrane-spanning segment; sequence SMNYGTIKWFFHVIIFSYVCFALV. The Extracellular segment spans residues 47-328; it reads SDKLYQRKEP…ILVFGTGGKF (282 aa). 3 disulfides stabilise this stretch: C119–C168, C129–C152, and C135–C162. Residues R125 and R133 each carry the ADP-ribosylarginine modification. Residue N187 is glycosylated (N-linked (GlcNAc...) asparagine). Position 189 (T189) interacts with ATP. N-linked (GlcNAc...) asparagine glycosylation is found at N202 and N213. Cysteines 216 and 226 form a disulfide. N241 is a glycosylation site (N-linked (GlcNAc...) asparagine). C260 and C269 are oxidised to a cystine. N-linked (GlcNAc...) asparagine glycosylation is present at N284. ATP is bound by residues R294 and K311. The helical transmembrane segment at 329 to 353 threads the bilayer; sequence DIIQLVVYIGSTLSYFGLAAVFIDF. S342 serves as a coordination point for Na(+). Y343 is subject to Phosphotyrosine. Residues 354–595 are Cytoplasmic-facing; it reads LIDTYSSNCC…GQYSGFKSPY (242 aa). Residues 360-377 form a C-cys anchor region; the sequence is SNCCRSHIYPWCKCCQPC. S-palmitoyl cysteine attachment occurs at residues C362, C363, C374, and C377. Phosphoserine is present on S390. Residues 395 to 595 form a cytoplasmic ballast region; sequence KPTLKYVSFV…GQYSGFKSPY (201 aa). The Zn(2+) site is built by C479, C499, and C506. Residues R546, H547, Y550, and A567 each contribute to the GTP site. C572 lines the Zn(2+) pocket. The GTP site is built by K583, S589, and G590.

The protein belongs to the P2X receptor family. As to quaternary structure, homotrimers. Interacts with LAMA3, ITGB2, ACTB, ACTN4, SVIL, MPP3, HSPA1, HSPCB, HSPA8, PIK230 and PTPRB. Interacts (via C-terminus) with EMP2. Interacts with isoform B; this interaction potentiates P2RX7 responses. Post-translationally, phosphorylation results in its inactivation. In terms of processing, ADP-ribosylation at Arg-125 is necessary and sufficient to activate P2RX7 and gate the channel. Palmitoylation of several cysteines in the C-terminal cytoplasmic tail is required for efficient localization to cell surface. Palmitoylation prevents channel desensitization by physically anchoring the palmitoylated groups to the membrane. In terms of tissue distribution, widely expressed with highest levels in brain and immune tissues. Predominant form in many tissues.

It localises to the cell membrane. It carries out the reaction Ca(2+)(in) = Ca(2+)(out). The catalysed reaction is K(+)(in) = K(+)(out). It catalyses the reaction Na(+)(in) = Na(+)(out). Its activity is regulated as follows. Activated by high extracellular ATP levels (0.1-2.5 mM). The synthetic analog 2'(3')-O-(4-benzoylbenzoyl)ATP (BzATP) acts as a potent agonist. Does not undergo desensitization, instead, undergoes a facilitation process where currents progressively increase with repetitive or prolonged agonist application. Palmitoylation prevents channel desensitization. The permeability of the P2RX7 channel is modulated by the amount of cholesterol in the plasma membrane. In terms of biological role, ATP-gated nonselective transmembrane cation channel that requires high millimolar concentrations of ATP for activation. Upon ATP binding, it rapidly opens to allow the influx of small cations Na(+) and Ca(2+), and the K(+) efflux. Also has the ability to form a large pore in the cell membrane, allowing the passage of large cationic molecules. In microglia, may mediate NADPH transport across the plasma membrane. In immune cells, P2RX7 acts as a molecular sensor in pathological inflammatory states by detecting and responding to high local concentrations of extracellar ATP. In microglial cells, P2RX7 activation leads to the release of pro-inflammatory cytokines, such as IL-1beta and IL-18, through the activation of the NLRP3 inflammasome and caspase-1. Cooperates with KCNK6 to activate NLRP3 inflammasome. Activates death pathways leading to apoptosis and autophagy. Activates death pathways leading to pyroptosis. Its function is as follows. Shows ion channel activity but no macropore function. Non-functional channel. The polypeptide is P2X purinoceptor 7 (P2RX7) (Homo sapiens (Human)).